We begin with the raw amino-acid sequence, 235 residues long: Phosphoribosylformylglycinamidine synthase subunit PurQ (235 aa).

In terms of domain architecture, Glutamine amidotransferase type-1 spans 4-234 (GILVFPGTNC…VQHLTGRVIR (231 aa)). The active-site Nucleophile is Cys86. Active-site residues include His203 and Glu205.

Part of the FGAM synthase complex composed of 1 PurL, 1 PurQ and 2 PurS subunits.

It localises to the cytoplasm. It catalyses the reaction N(2)-formyl-N(1)-(5-phospho-beta-D-ribosyl)glycinamide + L-glutamine + ATP + H2O = 2-formamido-N(1)-(5-O-phospho-beta-D-ribosyl)acetamidine + L-glutamate + ADP + phosphate + H(+). It carries out the reaction L-glutamine + H2O = L-glutamate + NH4(+). The protein operates within purine metabolism; IMP biosynthesis via de novo pathway; 5-amino-1-(5-phospho-D-ribosyl)imidazole from N(2)-formyl-N(1)-(5-phospho-D-ribosyl)glycinamide: step 1/2. Its function is as follows. Part of the phosphoribosylformylglycinamidine synthase complex involved in the purines biosynthetic pathway. Catalyzes the ATP-dependent conversion of formylglycinamide ribonucleotide (FGAR) and glutamine to yield formylglycinamidine ribonucleotide (FGAM) and glutamate. The FGAM synthase complex is composed of three subunits. PurQ produces an ammonia molecule by converting glutamine to glutamate. PurL transfers the ammonia molecule to FGAR to form FGAM in an ATP-dependent manner. PurS interacts with PurQ and PurL and is thought to assist in the transfer of the ammonia molecule from PurQ to PurL. The protein is Phosphoribosylformylglycinamidine synthase subunit PurQ of Symbiobacterium thermophilum (strain DSM 24528 / JCM 14929 / IAM 14863 / T).